The following is a 410-amino-acid chain: Argininosuccinate synthase (410 aa).

6–14 (AYSGGLDTS) serves as a coordination point for ATP. Tyr-84 serves as a coordination point for L-citrulline. Residue Gly-114 participates in ATP binding. Thr-116, Asn-120, and Asp-121 together coordinate L-aspartate. Residue Asn-120 coordinates L-citrulline. L-citrulline is bound by residues Arg-124, Ser-169, Ser-178, Glu-254, and Tyr-266.

Belongs to the argininosuccinate synthase family. Type 1 subfamily. As to quaternary structure, homotetramer.

The protein localises to the cytoplasm. The enzyme catalyses L-citrulline + L-aspartate + ATP = 2-(N(omega)-L-arginino)succinate + AMP + diphosphate + H(+). Its pathway is amino-acid biosynthesis; L-arginine biosynthesis; L-arginine from L-ornithine and carbamoyl phosphate: step 2/3. This is Argininosuccinate synthase from Pyrococcus furiosus (strain ATCC 43587 / DSM 3638 / JCM 8422 / Vc1).